Consider the following 93-residue polypeptide: MSKGHSLQDPFLNALRKERIPVSIFLVNGIKLQGQIESFDQYVVLLKNAVSQMVYKHAISTVVPARNPRATGNPAMAAGATAAPAADEGYGNQ.

Positions 9 to 68 (DPFLNALRKERIPVSIFLVNGIKLQGQIESFDQYVVLLKNAVSQMVYKHAISTVVPARNP) constitute a Sm domain. The span at 74–86 (PAMAAGATAAPAA) shows a compositional bias: low complexity. Residues 74–93 (PAMAAGATAAPAADEGYGNQ) form a disordered region.

The protein belongs to the Hfq family. Homohexamer.

RNA chaperone that binds small regulatory RNA (sRNAs) and mRNAs to facilitate mRNA translational regulation in response to envelope stress, environmental stress and changes in metabolite concentrations. Also binds with high specificity to tRNAs. The sequence is that of RNA-binding protein Hfq from Alcanivorax borkumensis (strain ATCC 700651 / DSM 11573 / NCIMB 13689 / SK2).